We begin with the raw amino-acid sequence, 362 residues long: Phosphoserine aminotransferase (362 aa).

L-glutamate is bound by residues Ser-9 and Arg-42. Residues 76–77 (GR), Trp-102, Thr-153, Asp-174, and Gln-197 contribute to the pyridoxal 5'-phosphate site. Lys-198 is modified (N6-(pyridoxal phosphate)lysine). 239-240 (NT) lines the pyridoxal 5'-phosphate pocket.

This sequence belongs to the class-V pyridoxal-phosphate-dependent aminotransferase family. SerC subfamily. Homodimer. Requires pyridoxal 5'-phosphate as cofactor.

It is found in the cytoplasm. The enzyme catalyses O-phospho-L-serine + 2-oxoglutarate = 3-phosphooxypyruvate + L-glutamate. The catalysed reaction is 4-(phosphooxy)-L-threonine + 2-oxoglutarate = (R)-3-hydroxy-2-oxo-4-phosphooxybutanoate + L-glutamate. The protein operates within amino-acid biosynthesis; L-serine biosynthesis; L-serine from 3-phospho-D-glycerate: step 2/3. It participates in cofactor biosynthesis; pyridoxine 5'-phosphate biosynthesis; pyridoxine 5'-phosphate from D-erythrose 4-phosphate: step 3/5. In terms of biological role, catalyzes the reversible conversion of 3-phosphohydroxypyruvate to phosphoserine and of 3-hydroxy-2-oxo-4-phosphonooxybutanoate to phosphohydroxythreonine. In Escherichia coli O1:K1 / APEC, this protein is Phosphoserine aminotransferase.